The primary structure comprises 910 residues: von Willebrand factor A domain-containing protein DDB_G0292740 (910 aa).

The 132-residue stretch at 63-194 (AYQYYNVSSF…SITIHITMIS (132 aa)) folds into the VIT domain. Residues 297–318 (IKNNPHSDSDSDSDDEENKKEN) form a disordered region. The VWFA domain maps to 346–515 (EFIFLIDCSG…DMETEVMKLL (170 aa)). The segment covering 703–719 (QYQQQQQQQQQNFNSGF) has biased composition (low complexity). Residues 703–815 (QYQQQQQQQQ…TQSESTPSND (113 aa)) form a disordered region. Over residues 720–749 (APPPPPMMSSGPPPPPGSSFGAPPPPPPGG) the composition is skewed to pro residues. The span at 750 to 802 (AFPTSSISEKKSSSQSSSSYLPPTMSLSRKSSLSPSSPSKNYPSPKLSSPSLS) shows a compositional bias: low complexity. A compositionally biased stretch (polar residues) spans 803–815 (YGSTQSESTPSND).

In Dictyostelium discoideum (Social amoeba), this protein is von Willebrand factor A domain-containing protein DDB_G0292740.